A 229-amino-acid chain; its full sequence is Multiple organellar RNA editing factor 5, chloroplastic/mitochondrial (229 aa).

Residues 1 to 57 (MAKTLARSTASRITKRLISTSGATTPSPSYILSRRSTPVFSHAVGFISSLNRFTTIR) constitute a chloroplast and mitochondrion transit peptide.

The protein belongs to the MORF family. In terms of assembly, homodimer and heterodimers with MORF8/RIP1, MORF3/RIP3, MORF6/RIP6, MORF7/RIP7 and MORF9/RIP9.

The protein resides in the mitochondrion. The protein localises to the plastid. Its subcellular location is the chloroplast. In terms of biological role, involved in organellar RNA editing. Required for the processing of few RNA editing sites in mitochondria. The chain is Multiple organellar RNA editing factor 5, chloroplastic/mitochondrial from Arabidopsis thaliana (Mouse-ear cress).